Consider the following 454-residue polypeptide: Glutamyl-tRNA reductase (454 aa).

Substrate-binding positions include 49 to 52, Ser-109, 114 to 116, and Gln-120; these read TCNR and ETQ. The active-site Nucleophile is the Cys-50. 189-194 is an NADP(+) binding site; sequence GAGKMS. The segment covering 432–442 has biased composition (basic and acidic residues); sequence DHAEQSWKEGQ. Positions 432-454 are disordered; sequence DHAEQSWKEGQRPSLNQGMALRT.

It belongs to the glutamyl-tRNA reductase family. In terms of assembly, homodimer.

The enzyme catalyses (S)-4-amino-5-oxopentanoate + tRNA(Glu) + NADP(+) = L-glutamyl-tRNA(Glu) + NADPH + H(+). It participates in porphyrin-containing compound metabolism; protoporphyrin-IX biosynthesis; 5-aminolevulinate from L-glutamyl-tRNA(Glu): step 1/2. Catalyzes the NADPH-dependent reduction of glutamyl-tRNA(Glu) to glutamate 1-semialdehyde (GSA). The chain is Glutamyl-tRNA reductase from Shouchella clausii (strain KSM-K16) (Alkalihalobacillus clausii).